The primary structure comprises 450 residues: GTPase Der (450 aa).

EngA-type G domains follow at residues 3–170 (PTIA…LATG) and 183–356 (LKIA…AECS). GTP-binding positions include 9 to 16 (GRPNVGKS), 56 to 60 (DTGGL), 122 to 125 (NKVD), 189 to 196 (GRPNAGKS), 236 to 240 (DTAGV), and 301 to 304 (NKID). Residues 357-441 (LRISTGQLNR…PLNIVFRSTF (85 aa)) enclose the KH-like domain.

It belongs to the TRAFAC class TrmE-Era-EngA-EngB-Septin-like GTPase superfamily. EngA (Der) GTPase family. Associates with the 50S ribosomal subunit.

Functionally, GTPase that plays an essential role in the late steps of ribosome biogenesis. The chain is GTPase Der from Maridesulfovibrio salexigens (strain ATCC 14822 / DSM 2638 / NCIMB 8403 / VKM B-1763) (Desulfovibrio salexigens).